The primary structure comprises 325 residues: Fructose-1,6-bisphosphatase class 1 (325 aa).

Mg(2+)-binding residues include glutamate 84, aspartate 103, leucine 105, and aspartate 106. Substrate is bound by residues 106–109, asparagine 196, and lysine 262; that span reads DGSS. A Mg(2+)-binding site is contributed by glutamate 268.

It belongs to the FBPase class 1 family. In terms of assembly, homotetramer. Mg(2+) serves as cofactor.

Its subcellular location is the cytoplasm. It catalyses the reaction beta-D-fructose 1,6-bisphosphate + H2O = beta-D-fructose 6-phosphate + phosphate. It participates in carbohydrate biosynthesis; gluconeogenesis. This chain is Fructose-1,6-bisphosphatase class 1, found in Shewanella baltica (strain OS195).